Here is a 483-residue protein sequence, read N- to C-terminus: Serine protease HTRA4 (483 aa).

The first 30 residues, 1–30, serve as a signal peptide directing secretion; it reads MSFQRLWAVRTQFLLLWLLLPAVPVPWAEA. One can recognise an IGFBP N-terminal domain in the interval 35 to 113; that stretch reads VSLPCPDACD…GAWLGTCGCA (79 aa). 6 disulfides stabilise this stretch: Cys-39/Cys-65, Cys-43/Cys-67, Cys-48/Cys-68, Cys-54/Cys-71, Cys-79/Cys-93, and Cys-87/Cys-110. Positions 208 to 368 are serine protease; sequence GSGFIVSEDG…IPSDRIRQFL (161 aa). Active-site charge relay system residues include His-224, Asp-254, and Ser-332. Residues 379-471 enclose the PDZ domain; that stretch reads KAPLQKKYLG…LSIIVLRGSQ (93 aa).

It belongs to the peptidase S1C family.

It is found in the secreted. Functionally, serine protease. The sequence is that of Serine protease HTRA4 (Htra4) from Mus musculus (Mouse).